We begin with the raw amino-acid sequence, 217 residues long: Large ribosomal subunit protein uL1 (217 aa).

Belongs to the universal ribosomal protein uL1 family. In terms of assembly, part of the 50S ribosomal subunit.

In terms of biological role, binds directly to 23S rRNA. Probably involved in E site tRNA release. Protein L1 is also a translational repressor protein, it controls the translation of its operon by binding to its mRNA. The protein is Large ribosomal subunit protein uL1 of Thermoplasma acidophilum (strain ATCC 25905 / DSM 1728 / JCM 9062 / NBRC 15155 / AMRC-C165).